Consider the following 496-residue polypeptide: Cytochrome P450 monooxygenase ausR (496 aa).

The chain crosses the membrane as a helical span at residues 12–32 (IGLYILWTIPVLFVIFKLLAP). Residue cysteine 435 participates in heme binding.

It belongs to the cytochrome P450 family. Heme serves as cofactor.

The protein resides in the membrane. Its pathway is secondary metabolite biosynthesis; terpenoid biosynthesis. Functionally, cytochrome P450 monooxygenase; part of the gene cluster B that mediates the biosynthesis of the fungal meroterpenoid acetoxydehydroaustin. The first step of the pathway is the synthesis of 3,5-dimethylorsellinic acid by the polyketide synthase ausA. 3,5-dimethylorsellinic acid is then prenylated by the polyprenyl transferase ausN. Further epoxidation by the FAD-dependent monooxygenase ausM and cyclization by the probable terpene cyclase ausL lead to the formation of protoaustinoid A. Protoaustinoid A is then oxidized to spiro-lactone preaustinoid A3 by the combined action of the FAD-binding monooxygenases ausB and ausC, and the dioxygenase ausE. Acid-catalyzed keto-rearrangement and ring contraction of the tetraketide portion of preaustinoid A3 by ausJ lead to the formation of preaustinoid A4. The aldo-keto reductase ausK, with the help of ausH, is involved in the next step by transforming preaustinoid A4 into isoaustinone which is in turn hydroxylated by the P450 monooxygenase ausI to form austinolide. The cytochrome P450 monooxygenase ausG then modifies austinolide to austinol. Austinol is further acetylated to austin by the O-acetyltransferase ausP, which spontaneously changes to dehydroaustin. The cytochrome P450 monooxygenase then converts dehydroaustin is into 7-dehydrodehydroaustin. The hydroxylation catalyzed by ausR permits the second O-acetyltransferase ausQ to add an additional acetyl group to the molecule, leading to the formation of acetoxydehydroaustin. Due to genetic rearrangements of the clusters and the subsequent loss of some enzymes, the end product of the Penicillium brasilianum austinoid biosynthesis clusters is acetoxydehydroaustin. The polypeptide is Cytochrome P450 monooxygenase ausR (Penicillium brasilianum).